Reading from the N-terminus, the 281-residue chain is NADPH-dependent 7-cyano-7-deazaguanine reductase (281 aa).

88–90 (VES) is a substrate binding site. 90 to 91 (SK) serves as a coordination point for NADPH. Cys189 (thioimide intermediate) is an active-site residue. The Proton donor role is filled by Asp196. 228-229 (HE) lines the substrate pocket. An NADPH-binding site is contributed by 257-258 (RG).

The protein belongs to the GTP cyclohydrolase I family. QueF type 2 subfamily. As to quaternary structure, homodimer.

The protein localises to the cytoplasm. It carries out the reaction 7-aminomethyl-7-carbaguanine + 2 NADP(+) = 7-cyano-7-deazaguanine + 2 NADPH + 3 H(+). The protein operates within tRNA modification; tRNA-queuosine biosynthesis. Its function is as follows. Catalyzes the NADPH-dependent reduction of 7-cyano-7-deazaguanine (preQ0) to 7-aminomethyl-7-deazaguanine (preQ1). The protein is NADPH-dependent 7-cyano-7-deazaguanine reductase of Klebsiella pneumoniae subsp. pneumoniae (strain ATCC 700721 / MGH 78578).